An 83-amino-acid polypeptide reads, in one-letter code: Toxin To15 (83 aa).

An N-terminal signal peptide occupies residues 1–19 (MKGIILLISCLMLIEVVVG). The region spanning 21–82 (KEGYPLDSSG…IWNAKTNKCY (62 aa)) is the LCN-type CS-alpha/beta domain. 4 cysteine pairs are disulfide-bonded: C31–C81, C35–C57, C43–C62, and C47–C64.

The protein belongs to the long (4 C-C) scorpion toxin superfamily. Sodium channel inhibitor family. Beta subfamily. As to expression, expressed by the venom gland.

It localises to the secreted. Its function is as follows. Beta toxins bind voltage-independently at site-4 of sodium channels (Nav) and shift the voltage of activation toward more negative potentials thereby affecting sodium channel activation and promoting spontaneous and repetitive firing. The sequence is that of Toxin To15 from Tityus obscurus (Amazonian scorpion).